Reading from the N-terminus, the 266-residue chain is 4-hydroxy-tetrahydrodipicolinate reductase (266 aa).

10–15 (GPRGRM) contacts NAD(+). Lysine 38 lines the NADP(+) pocket. NAD(+) is bound by residues 99-101 (GTT) and 125-128 (APNF). The active-site Proton donor/acceptor is histidine 155. (S)-2,3,4,5-tetrahydrodipicolinate is bound at residue histidine 156. The active-site Proton donor is the lysine 159. 165 to 166 (GT) contributes to the (S)-2,3,4,5-tetrahydrodipicolinate binding site.

It belongs to the DapB family.

Its subcellular location is the cytoplasm. The catalysed reaction is (S)-2,3,4,5-tetrahydrodipicolinate + NAD(+) + H2O = (2S,4S)-4-hydroxy-2,3,4,5-tetrahydrodipicolinate + NADH + H(+). It catalyses the reaction (S)-2,3,4,5-tetrahydrodipicolinate + NADP(+) + H2O = (2S,4S)-4-hydroxy-2,3,4,5-tetrahydrodipicolinate + NADPH + H(+). The protein operates within amino-acid biosynthesis; L-lysine biosynthesis via DAP pathway; (S)-tetrahydrodipicolinate from L-aspartate: step 4/4. Functionally, catalyzes the conversion of 4-hydroxy-tetrahydrodipicolinate (HTPA) to tetrahydrodipicolinate. The chain is 4-hydroxy-tetrahydrodipicolinate reductase from Bacillus thuringiensis subsp. konkukian (strain 97-27).